The sequence spans 503 residues: Mitogen-activated protein kinase kinae mkk2 (503 aa).

The tract at residues 1 to 130 (MSSSPVPLLR…ASGPASASSS (130 aa)) is disordered. A compositionally biased stretch (pro residues) spans 53 to 66 (APQPQRPSTRPAPP). Over residues 100–115 (TGLNESTGHSRSSSFT) the composition is skewed to polar residues. The segment covering 121–130 (ASGPASASSS) has biased composition (low complexity). A Protein kinase domain is found at 211-481 (IIELGSLGEG…PWRMLEHPWM (271 aa)). ATP is bound by residues 217 to 225 (LGEGAGGAV) and lysine 240. Catalysis depends on aspartate 338, which acts as the Proton acceptor.

The protein belongs to the protein kinase superfamily. STE Ser/Thr protein kinase family. MAP kinase kinase subfamily.

It carries out the reaction L-seryl-[protein] + ATP = O-phospho-L-seryl-[protein] + ADP + H(+). It catalyses the reaction L-threonyl-[protein] + ATP = O-phospho-L-threonyl-[protein] + ADP + H(+). In terms of biological role, mitogen-activated kinase kinase (MAPKK), part of the cell wall integrity (CWI) signaling pathway composed by three protein kinases bck1, mkk2 and mpkA and responsible for the maintaining of cell-wall integrity balance. The CWI pathway also regulates the oxidative stress response, as well as the production of some secondary metabolites including pyomelanin. The sequence is that of Mitogen-activated protein kinase kinae mkk2 from Aspergillus fumigatus (strain CBS 144.89 / FGSC A1163 / CEA10) (Neosartorya fumigata).